The following is an 821-amino-acid chain: Fibroblast growth factor receptor 2 (821 aa).

The first 21 residues, 1 to 21 (MVSWGRFICLVVVTMATLSLA), serve as a signal peptide directing secretion. Topologically, residues 22–377 (RPSFSLVEDT…EITASPDYLE (356 aa)) are extracellular. An Ig-like C2-type 1 domain is found at 25-125 (FSLVEDTTLE…ETWYFMVNVT (101 aa)). A disulfide bond links C62 and C107. N-linked (GlcNAc...) asparagine glycans are attached at residues N83 and N123. The span at 131–144 (GDDEDDTDGAEDFV) shows a compositional bias: acidic residues. The tract at residues 131 to 151 (GDDEDDTDGAEDFVSENSNNK) is disordered. Ig-like C2-type domains are found at residues 154-247 (PYWT…YHLD) and 256-358 (PILQ…AWLT). A heparin-binding region spans residues 161–178 (KMEKRLHAVPAANTVKFR). C179 and C231 are disulfide-bonded. N228, N241, N265, N297, N318, and N331 each carry an N-linked (GlcNAc...) asparagine glycan. C278 and C342 form a disulfide bridge. Residues 378 to 398 (IAIYCIGVFLIACMVVTVILC) form a helical membrane-spanning segment. The Cytoplasmic portion of the chain corresponds to 399 to 821 (RMKNTTKKPD…YPHINGSVKT (423 aa)). At Y466 the chain carries Phosphotyrosine; by autocatalysis. Positions 481 to 770 (LTLGKPLGEG…LTLTTNEEYL (290 aa)) constitute a Protein kinase domain. Residues 487–495 (LGEGCFGQV), K517, 565–567 (EYA), and N571 each bind ATP. Phosphotyrosine; by autocatalysis occurs at positions 586 and 588. D626 serves as the catalytic Proton acceptor. 3 positions are modified to phosphotyrosine; by autocatalysis: Y656, Y657, and Y769. The residue at position 780 (S780) is a Phosphoserine.

The protein belongs to the protein kinase superfamily. Tyr protein kinase family. Fibroblast growth factor receptor subfamily. As to quaternary structure, monomer. Homodimer after ligand binding. Interacts predominantly with FGF1 and FGF2, but can also interact with FGF3, FGF4, FGF6, FGF7, FGF8, FGF9, FGF10, FGF17, FGF18 and FGF22 (in vitro). Ligand specificity is determined by tissue-specific expression of isoforms, and differences in the third Ig-like domain are crucial for ligand specificity. Isoform 1 has high affinity for FGF1 and FGF2, but low affinity for FGF7. Isoform 3 has high affinity for FGF1 and FGF7, and has much higher affinity for FGF7 than isoform 1 (in vitro). Affinity for fibroblast growth factors (FGFs) is increased by heparan sulfate glycosaminoglycans that function as coreceptors. Likewise, KLB increases the affinity for FGF19 and FGF21. Interacts with PLCG1, GRB2 and PAK4. Interacts with FLRT2. Post-translationally, autophosphorylated. Binding of FGF family members together with heparan sulfate proteoglycan or heparin promotes receptor dimerization and autophosphorylation on several tyrosine residues. Autophosphorylation occurs in trans between the two FGFR molecules present in the dimer. Phosphorylation at Tyr-769 is essential for interaction with PLCG1. N-glycosylated in the endoplasmic reticulum. The N-glycan chains undergo further maturation to an Endo H-resistant form in the Golgi apparatus. In terms of processing, ubiquitinated. FGFR2 is rapidly ubiquitinated after autophosphorylation, leading to internalization and degradation. Subject to degradation both in lysosomes and by the proteasome.

The protein localises to the cell membrane. It is found in the golgi apparatus. It localises to the cytoplasmic vesicle. Its subcellular location is the secreted. It carries out the reaction L-tyrosyl-[protein] + ATP = O-phospho-L-tyrosyl-[protein] + ADP + H(+). Its activity is regulated as follows. Present in an inactive conformation in the absence of bound ligand. Ligand binding leads to dimerization and activation by autophosphorylation on tyrosine residues. Inhibited by ARQ 523 and ARQ 069; these compounds maintain the kinase in an inactive conformation and inhibit autophosphorylation. In terms of biological role, tyrosine-protein kinase that acts as a cell-surface receptor for fibroblast growth factors and plays an essential role in the regulation of cell proliferation, differentiation, migration and apoptosis, and in the regulation of embryonic development. Required for normal embryonic patterning, trophoblast function, limb bud development, lung morphogenesis, osteogenesis and skin development. Plays an essential role in the regulation of osteoblast differentiation, proliferation and apoptosis, and is required for normal skeleton development. Promotes cell proliferation in keratinocytes and immature osteoblasts, but promotes apoptosis in differentiated osteoblasts. Phosphorylates PLCG1, FRS2 and PAK4. Ligand binding leads to the activation of several signaling cascades. Activation of PLCG1 leads to the production of the cellular signaling molecules diacylglycerol and inositol 1,4,5-trisphosphate. Phosphorylation of FRS2 triggers recruitment of GRB2, GAB1, PIK3R1 and SOS1, and mediates activation of RAS, MAPK1/ERK2, MAPK3/ERK1 and the MAP kinase signaling pathway, as well as of the AKT1 signaling pathway. FGFR2 signaling is down-regulated by ubiquitination, internalization and degradation. Mutations that lead to constitutive kinase activation or impair normal FGFR2 maturation, internalization and degradation lead to aberrant signaling. Over-expressed FGFR2 promotes activation of STAT1. The chain is Fibroblast growth factor receptor 2 (FGFR2) from Homo sapiens (Human).